The following is a 65-amino-acid chain: MPKIKTLRSASKRFKKTASGLFKRKKANLRHILTKKNTNYKRCLRKKIILSLSDYKKVLLFLPYL.

The protein belongs to the bacterial ribosomal protein bL35 family.

This is Large ribosomal subunit protein bL35 from Buchnera aphidicola subsp. Cinara cedri (strain Cc).